A 492-amino-acid chain; its full sequence is SH2 domain-containing adapter protein E (492 aa).

Disordered stretches follow at residues 46 to 193, 214 to 236, 260 to 332, and 347 to 384; these read TASE…DKAK, KRTK…EPYD, LDGP…EQPW, and FEGS…KVDP. Ser-103 bears the Phosphoserine mark. Basic and acidic residues predominate over residues 149-158; it reads IKVDTQEKNG. Over residues 168-184 the composition is skewed to low complexity; that stretch reads TSSSSSSSSSASSSPSS. Basic and acidic residues-rich tracts occupy residues 214 to 227, 268 to 285, 306 to 332, 349 to 361, and 373 to 383; these read KRTK…RVGE, ETVK…KDLL, AEVK…EQPW, GSDR…DAGR, and LSDHGDGEKVD. The region spanning 393–488 is the SH2 domain; the sequence is WYHGSISRAE…AEHMTLLHPV (96 aa).

Expressed in heart, brain, lung and skeletal muscle.

The chain is SH2 domain-containing adapter protein E (She) from Mus musculus (Mouse).